Consider the following 354-residue polypeptide: Probable L-ascorbate-6-phosphate lactonase UlaG (354 aa).

It belongs to the UlaG family. A divalent metal cation serves as cofactor.

The protein resides in the cytoplasm. It carries out the reaction L-ascorbate 6-phosphate + H2O = 3-dehydro-L-gulonate 6-phosphate. Its pathway is cofactor degradation; L-ascorbate degradation; D-xylulose 5-phosphate from L-ascorbate: step 1/4. In terms of biological role, probably catalyzes the hydrolysis of L-ascorbate-6-P into 3-keto-L-gulonate-6-P. Is essential for L-ascorbate utilization under anaerobic conditions. The sequence is that of Probable L-ascorbate-6-phosphate lactonase UlaG from Shigella dysenteriae serotype 1 (strain Sd197).